The primary structure comprises 354 residues: Protein Wnt-11 (354 aa).

Positions 1 to 24 (MRARPQVCEALLFALALHTGVCYG) are cleaved as a signal peptide. 2 N-linked (GlcNAc...) asparagine glycosylation sites follow: asparagine 40 and asparagine 90. 3 cysteine pairs are disulfide-bonded: cysteine 80–cysteine 91, cysteine 130–cysteine 138, and cysteine 140–cysteine 157. Asparagine 160 carries N-linked (GlcNAc...) asparagine glycosylation. 8 cysteine pairs are disulfide-bonded: cysteine 209/cysteine 223, cysteine 211/cysteine 218, cysteine 283/cysteine 314, cysteine 299/cysteine 309, cysteine 313/cysteine 353, cysteine 329/cysteine 344, cysteine 331/cysteine 341, and cysteine 336/cysteine 337. The O-palmitoleoyl serine; by PORCN moiety is linked to residue serine 215. Residues asparagine 300 and asparagine 304 are each glycosylated (N-linked (GlcNAc...) asparagine).

The protein belongs to the Wnt family. Post-translationally, palmitoleoylation is required for efficient binding to frizzled receptors. Depalmitoleoylation leads to Wnt signaling pathway inhibition.

The protein localises to the secreted. Its subcellular location is the extracellular space. The protein resides in the extracellular matrix. Its function is as follows. Ligand for members of the frizzled family of seven transmembrane receptors. Probable developmental protein. May be a signaling molecule which affects the development of discrete regions of tissues. Is likely to signal over only few cell diameters. The chain is Protein Wnt-11 (Wnt11) from Mus musculus (Mouse).